The primary structure comprises 428 residues: Nucleoside diphosphate phosphatase ENTPD5 (428 aa).

A signal peptide spans 1 to 24 (MATSWGTVFFMLVVSCVCSAVSHR). The Proton acceptor role is filled by Glu-172. Residue Asn-232 is glycosylated (N-linked (GlcNAc...) asparagine). Cystine bridges form between Cys-272/Cys-303 and Cys-363/Cys-377. Asn-368 carries an N-linked (GlcNAc...) asparagine glycan.

This sequence belongs to the GDA1/CD39 NTPase family. In terms of assembly, monomer; active form. Homodimer; disulfide-linked. Homodimers are enzymatically inactive. Ca(2+) is required as a cofactor. The cofactor is Mg(2+). N-glycosylated; high-mannose type. Glycosylation is not essential for enzymatic activity. As to expression, expressed in adult liver, kidney, prostate, testis and colon. Much weaker expression in other tissues.

It localises to the endoplasmic reticulum. Its subcellular location is the secreted. It catalyses the reaction a ribonucleoside 5'-diphosphate + H2O = a ribonucleoside 5'-phosphate + phosphate + H(+). It carries out the reaction GDP + H2O = GMP + phosphate + H(+). The catalysed reaction is UDP + H2O = UMP + phosphate + H(+). The enzyme catalyses IDP + H2O = IMP + phosphate + H(+). It catalyses the reaction CDP + H2O = CMP + phosphate + H(+). It carries out the reaction ADP + H2O = AMP + phosphate + H(+). The protein operates within protein modification; protein glycosylation. Functionally, hydrolyzes nucleoside diphosphates with a preference for GDP, IDP and UDP compared to ADP and CDP. In the lumen of the endoplasmic reticulum, hydrolyzes UDP that acts as an end-product feedback inhibitor of the UDP-Glc:glycoprotein glucosyltransferases. UMP can be transported back by an UDP-sugar antiporter to the cytosol where it is consumed to regenerate UDP-glucose. Therefore, it positively regulates protein reglucosylation by clearing UDP from the ER lumen and by promoting the regeneration of UDP-glucose. Protein reglucosylation is essential to proper glycoprotein folding and quality control in the ER. The polypeptide is Nucleoside diphosphate phosphatase ENTPD5 (Homo sapiens (Human)).